Here is a 195-residue protein sequence, read N- to C-terminus: Imidazoleglycerol-phosphate dehydratase (195 aa).

This sequence belongs to the imidazoleglycerol-phosphate dehydratase family.

The protein resides in the cytoplasm. It carries out the reaction D-erythro-1-(imidazol-4-yl)glycerol 3-phosphate = 3-(imidazol-4-yl)-2-oxopropyl phosphate + H2O. It participates in amino-acid biosynthesis; L-histidine biosynthesis; L-histidine from 5-phospho-alpha-D-ribose 1-diphosphate: step 6/9. The sequence is that of Imidazoleglycerol-phosphate dehydratase from Paracoccus denitrificans (strain Pd 1222).